We begin with the raw amino-acid sequence, 307 residues long: Putative transcription factor bHLH086 (307 aa).

Disordered stretches follow at residues 1–49 (MSLI…DHQN) and 167–215 (HEST…QSLA). 2 stretches are compositionally biased toward polar residues: residues 12–28 (NYIS…SPQN) and 183–197 (GENT…SGTN). A basic motif region spans residues 207 to 220 (SPKDPQSLAAKNRR). Positions 207–256 (SPKDPQSLAAKNRRERISERLKVLQELVPNGTKVDLVTMLEKAIGYVKFL) constitute a bHLH domain. The helix-loop-helix motif stretch occupies residues 221–256 (ERISERLKVLQELVPNGTKVDLVTMLEKAIGYVKFL).

Homodimer. Forms heterodimers with RHD6. Interacts with TIFY10B/JAZ2, TIFY6A/JAZ4, TIFY5A/JAZ8, TIFY7/JAZ9 and TIFY9/JAZ10.

It is found in the nucleus. Its function is as follows. Transcription factor that is specifically required for the development of root hairs. Acts with RHD6 to positively regulate root hair development. Acts downstream of genes that regulate epidermal pattern formation, such as GL2. Acts with RHD6 as transcription factor that integrates a jasmonate (JA) signaling pathway that stimulates root hair growth. This is Putative transcription factor bHLH086 from Arabidopsis thaliana (Mouse-ear cress).